A 171-amino-acid polypeptide reads, in one-letter code: Large ribosomal subunit protein uL22 (171 aa).

The protein belongs to the universal ribosomal protein uL22 family.

The sequence is that of Large ribosomal subunit protein uL22 (RPL17) from Zea mays (Maize).